Consider the following 347-residue polypeptide: Syntaxin-32 (347 aa).

Residues 1–325 (MSARHGQSSY…RYLNSISSNR (325 aa)) are Cytoplasmic-facing. Disordered regions lie at residues 172–191 (HESRRQLFSSNASKESTNPF) and 208–251 (PLPW…QQMV). 2 stretches are compositionally biased toward polar residues: residues 177–191 (QLFSSNASKESTNPF) and 213–222 (NGSSSSSSQL). The segment covering 237-249 (QQSQQQQQQQQQQ) has biased composition (low complexity). One can recognise a t-SNARE coiled-coil homology domain in the interval 255–317 (DTYMQGRAEA…EGAQSQLARY (63 aa)). Residues 326–346 (WLMMKIFFVLIAFLMIFLFFV) traverse the membrane as a helical; Anchor for type IV membrane protein segment. Ala-347 is a topological domain (vesicular).

It belongs to the syntaxin family. As to quaternary structure, part of the t-SNARE complex.

The protein localises to the golgi apparatus. It localises to the cis-Golgi network membrane. Functionally, vesicle trafficking protein that functions in the secretory pathway. This is Syntaxin-32 (SYP32) from Arabidopsis thaliana (Mouse-ear cress).